We begin with the raw amino-acid sequence, 506 residues long: Glutamate--tRNA ligase (506 aa).

The 'HIGH' region motif lies at 24–34; it reads PSPTGLQHIGG. Residues Cys-121, Cys-123, Cys-148, and His-150 each contribute to the Zn(2+) site. A 'KMSKS' region motif is present at residues 266–270; it reads KLSKR. Position 269 (Lys-269) interacts with ATP.

This sequence belongs to the class-I aminoacyl-tRNA synthetase family. Glutamate--tRNA ligase type 1 subfamily. Monomer. Zn(2+) is required as a cofactor.

The protein resides in the cytoplasm. It carries out the reaction tRNA(Glu) + L-glutamate + ATP = L-glutamyl-tRNA(Glu) + AMP + diphosphate. Its function is as follows. Catalyzes the attachment of glutamate to tRNA(Glu) in a two-step reaction: glutamate is first activated by ATP to form Glu-AMP and then transferred to the acceptor end of tRNA(Glu). This Borrelia recurrentis (strain A1) protein is Glutamate--tRNA ligase.